The sequence spans 617 residues: Serine/threonine-protein phosphatase 2A activator 1 (617 aa).

Residues 1–11 (MDPTSKRPPPA) show a composition bias toward pro residues. Disordered regions lie at residues 1–25 (MDPTSKRPPPAASSSTTYPPLPKLE), 84–169 (VSTS…ESES), 230–261 (GAGGEKKEEEEGTETETETETEGDSDKKTNEQ), 376–398 (SSPNEPTPLEGSVPNAPKPSDIT), and 572–617 (RFTP…PWTK). Residues 84–93 (VSTSEPTTDG) are compositionally biased toward polar residues. The span at 94–104 (QQQQQQQQQRQ) shows a compositional bias: low complexity. Residues 239 to 252 (EEGTETETETETEG) are compositionally biased toward acidic residues.

It belongs to the PTPA-type PPIase family.

The protein localises to the cytoplasm. Its subcellular location is the nucleus. The catalysed reaction is [protein]-peptidylproline (omega=180) = [protein]-peptidylproline (omega=0). Its function is as follows. PPIases accelerate the folding of proteins. It catalyzes the cis-trans isomerization of proline imidic peptide bonds in oligopeptides. Acts as a regulatory subunit for PP2A-like phosphatases modulating their activity or substrate specificity, probably by inducing a conformational change in the catalytic subunit, a direct target of the PPIase. Can reactivate inactive phosphatase PP2A-phosphatase methylesterase complexes (PP2Ai) in presence of ATP and Mg(2+) by dissociating the inactive form from the complex. This is Serine/threonine-protein phosphatase 2A activator 1 (rrd-1) from Neurospora crassa (strain ATCC 24698 / 74-OR23-1A / CBS 708.71 / DSM 1257 / FGSC 987).